A 552-amino-acid polypeptide reads, in one-letter code: Glutamine--tRNA ligase (552 aa).

The 'HIGH' region motif lies at 34–44; it reads PEPNGYLHIGH. ATP-binding positions include 35–37 and 41–47; these read EPN and HIGHAKS. Residues Asp-67 and Tyr-212 each coordinate L-glutamine. Residues Thr-231, 261–262, and 269–271 each bind ATP; these read RL and MSK. A 'KMSKS' region motif is present at residues 268-272; sequence IMSKR.

It belongs to the class-I aminoacyl-tRNA synthetase family. Monomer.

Its subcellular location is the cytoplasm. It carries out the reaction tRNA(Gln) + L-glutamine + ATP = L-glutaminyl-tRNA(Gln) + AMP + diphosphate. The sequence is that of Glutamine--tRNA ligase from Aliivibrio salmonicida (strain LFI1238) (Vibrio salmonicida (strain LFI1238)).